The chain runs to 594 residues: Aspartate--tRNA(Asp/Asn) ligase (594 aa).

E175 lines the L-aspartate pocket. Positions Q199–K202 are aspartate. The L-aspartate site is built by R221 and H455. ATP is bound at residue R221–E223. E488 contacts ATP. R495 is a binding site for L-aspartate. G540–R543 contributes to the ATP binding site.

This sequence belongs to the class-II aminoacyl-tRNA synthetase family. Type 1 subfamily. In terms of assembly, homodimer.

It is found in the cytoplasm. The enzyme catalyses tRNA(Asx) + L-aspartate + ATP = L-aspartyl-tRNA(Asx) + AMP + diphosphate. In terms of biological role, aspartyl-tRNA synthetase with relaxed tRNA specificity since it is able to aspartylate not only its cognate tRNA(Asp) but also tRNA(Asn). Reaction proceeds in two steps: L-aspartate is first activated by ATP to form Asp-AMP and then transferred to the acceptor end of tRNA(Asp/Asn). The sequence is that of Aspartate--tRNA(Asp/Asn) ligase from Ruegeria sp. (strain TM1040) (Silicibacter sp.).